Consider the following 847-residue polypeptide: DNA gyrase subunit A (847 aa).

In terms of domain architecture, Topo IIA-type catalytic spans 34–533; sequence LPDVRDGLKP…NYSDINTSDL (500 aa). Residue Y122 is the O-(5'-phospho-DNA)-tyrosine intermediate of the active site. A GyrA-box motif is present at residues 560-566; that stretch reads QKRGGKG.

The protein belongs to the type II topoisomerase GyrA/ParC subunit family. In terms of assembly, heterotetramer, composed of two GyrA and two GyrB chains. In the heterotetramer, GyrA contains the active site tyrosine that forms a transient covalent intermediate with DNA, while GyrB binds cofactors and catalyzes ATP hydrolysis.

The protein localises to the cytoplasm. It carries out the reaction ATP-dependent breakage, passage and rejoining of double-stranded DNA.. A type II topoisomerase that negatively supercoils closed circular double-stranded (ds) DNA in an ATP-dependent manner to modulate DNA topology and maintain chromosomes in an underwound state. Negative supercoiling favors strand separation, and DNA replication, transcription, recombination and repair, all of which involve strand separation. Also able to catalyze the interconversion of other topological isomers of dsDNA rings, including catenanes and knotted rings. Type II topoisomerases break and join 2 DNA strands simultaneously in an ATP-dependent manner. The sequence is that of DNA gyrase subunit A from Buchnera aphidicola subsp. Baizongia pistaciae (strain Bp).